The sequence spans 218 residues: Thyroid hormone receptor alpha (218 aa).

One can recognise an NR LBD domain in the interval 1–215; sequence PEDIGQSPGV…PPLFLEVFED (215 aa). The 3,3',5-triiodo-L-thyronine site is built by Arg36 and Ser85.

Belongs to the nuclear hormone receptor family. NR1 subfamily.

It is found in the nucleus. Nuclear hormone receptor that can act as a repressor or activator of transcription. High affinity receptor for thyroid hormones, including triiodothyronine and thyroxine. In Oncorhynchus mykiss (Rainbow trout), this protein is Thyroid hormone receptor alpha (thra).